The chain runs to 166 residues: Interferon gamma (166 aa).

An N-terminal signal peptide occupies residues 1–23; the sequence is MKYTSYFLALLLCVLLGFSGSYG. Gln24 carries the post-translational modification Pyrrolidone carboxylic acid. Asn39 and Asn106 each carry an N-linked (GlcNAc...) asparagine glycan.

It belongs to the type II (or gamma) interferon family. In terms of assembly, homodimer. Interacts with IFNGR1 (via extracellular domain); this interaction promotes IFNGR1 dimerization. In terms of tissue distribution, released primarily from activated T lymphocytes.

The protein localises to the secreted. Type II interferon produced by immune cells such as T-cells and NK cells that plays crucial roles in antimicrobial, antiviral, and antitumor responses by activating effector immune cells and enhancing antigen presentation. Primarily signals through the JAK-STAT pathway after interaction with its receptor IFNGR1 to affect gene regulation. Upon IFNG binding, IFNGR1 intracellular domain opens out to allow association of downstream signaling components JAK2, JAK1 and STAT1, leading to STAT1 activation, nuclear translocation and transcription of IFNG-regulated genes. Many of the induced genes are transcription factors such as IRF1 that are able to further drive regulation of a next wave of transcription. Plays a role in class I antigen presentation pathway by inducing a replacement of catalytic proteasome subunits with immunoproteasome subunits. In turn, increases the quantity, quality, and repertoire of peptides for class I MHC loading. Increases the efficiency of peptide generation also by inducing the expression of activator PA28 that associates with the proteasome and alters its proteolytic cleavage preference. Up-regulates as well MHC II complexes on the cell surface by promoting expression of several key molecules such as cathepsins B/CTSB, H/CTSH, and L/CTSL. Participates in the regulation of hematopoietic stem cells during development and under homeostatic conditions by affecting their development, quiescence, and differentiation. The chain is Interferon gamma (IFNG) from Bos indicus (Zebu).